A 123-amino-acid chain; its full sequence is Major pollen allergen Ole e 10 (123 aa).

The first 21 residues, 1-21 (MRGTAGVPDQPVPTPTPSVPT), serve as a signal peptide directing secretion. Positions 1–37 (MRGTAGVPDQPVPTPTPSVPTSSSPVPKPPTQGNKKW) are disordered. C38 and C101 are joined by a disulfide.

The N-terminus is blocked. In terms of processing, phosphorylated at Ser-24 when expressed as a recombinant protein in a heterologous system. Post-translationally, not glycosylated. Contains two additional disulfide bonds. Expressed in mature and germinating pollen.

The protein localises to the cytoplasmic vesicle. In terms of biological role, carbohydrate-binding protein binding preferentially 1,3-beta-glucans. May be involved in pollen tube wall re-formation during germination. This Olea europaea (Common olive) protein is Major pollen allergen Ole e 10.